The following is a 698-amino-acid chain: Serotransferrin (698 aa).

Positions Met-1–Ala-19 are cleaved as a signal peptide. Transferrin-like domains are found at residues Val-25–Glu-347 and Val-361–Lys-683. Disulfide bonds link Cys-28-Cys-67 and Cys-38-Cys-58. Arg-42 bears the Dimethylated arginine mark. O-linked (GalNAc...) serine glycosylation occurs at Ser-51. Residues Asp-82 and Tyr-114 each coordinate Fe(3+). 17 cysteine pairs are disulfide-bonded: Cys-137–Cys-213, Cys-156–Cys-350, Cys-177–Cys-193, Cys-180–Cys-196, Cys-190–Cys-198, Cys-246–Cys-260, Cys-358–Cys-615, Cys-364–Cys-396, Cys-374–Cys-387, Cys-421–Cys-693, Cys-437–Cys-656, Cys-469–Cys-542, Cys-493–Cys-684, Cys-503–Cys-517, Cys-514–Cys-525, Cys-582–Cys-596, and Cys-634–Cys-639. Hydrogencarbonate contacts are provided by Thr-139, Arg-143, Ala-145, and Gly-146. Fe(3+) is bound at residue Tyr-207. His-268 serves as a coordination point for Fe(3+). Phosphoserine is present on Ser-389. The Fe(3+) site is built by Asp-411 and Tyr-445. Hydrogencarbonate-binding residues include Thr-471, Arg-475, Ala-477, and Gly-478. Fe(3+) is bound at residue Tyr-536. His-604 contributes to the Fe(3+) binding site. An N-linked (GlcNAc...) asparagine glycan is attached at Asn-630. The residue at position 685 (Ser-685) is a Phosphoserine.

The protein belongs to the transferrin family. In terms of assembly, monomer. Part of a complex composed of SLC40A1/ferroportin, TF/transferrin and HEPH/hephaestin that transfers iron from cells to transferrin. As to expression, expressed by the liver and secreted in plasma.

It localises to the secreted. Functionally, transferrins are iron binding transport proteins which can bind two Fe(3+) ions in association with the binding of an anion, usually bicarbonate. It is responsible for the transport of iron from sites of absorption and heme degradation to those of storage and utilization. Serum transferrin may also have a further role in stimulating cell proliferation. This is Serotransferrin (TF) from Pan troglodytes (Chimpanzee).